Reading from the N-terminus, the 377-residue chain is Sodium-dependent organic anion transporter (377 aa).

Residues 1–29 are Extracellular-facing; it reads MRANCSSGLACPANSSEEELPEGLKAFGN. The N-linked (GlcNAc...) asparagine glycan is linked to N4. Residues 30–50 traverse the membrane as a helical segment; it reads LDLVFTVVSALMIGLLMFSLG. The Cytoplasmic portion of the chain corresponds to 51-67; sequence CSVEVQKLWGHIRRPWG. The chain crosses the membrane as a helical span at residues 68 to 88; the sequence is IAVGMLCQFGLMPLIAYLLII. Residues 89-97 lie on the Extracellular side of the membrane; sequence SFSLKPLQA. Residues 98-118 form a helical membrane-spanning segment; the sequence is IAVLIMGCCPGGTVSNIFTFW. Topologically, residues 119–133 are cytoplasmic; it reads VDGDMDLSISMTTCS. The chain crosses the membrane as a helical span at residues 134 to 154; it reads TMAALGMMPLCLYLYTLSWNL. The Extracellular portion of the chain corresponds to 155–159; that stretch reads EQNLT. Residue N157 is glycosylated (N-linked (GlcNAc...) asparagine). Residues 160–180 form a helical membrane-spanning segment; it reads IPYQNIGITLVCLIIPVAFGI. The Cytoplasmic portion of the chain corresponds to 181–195; the sequence is YVNYRWPKQSKIILK. A helical transmembrane segment spans residues 196-216; sequence IGAIAGGLLFLVVTGAGMVLM. Topologically, residues 217 to 223 are extracellular; it reads KEFWSSD. The chain crosses the membrane as a helical span at residues 224-244; the sequence is IILLMISFIFPLIGHATGFLL. At 245-257 the chain is on the cytoplasmic side; the sequence is ALLTHQSWQRCRT. The helical transmembrane segment at 258-278 threads the bilayer; it reads ISLETGTQNVQMCFTMLQLSF. The Extracellular segment spans residues 279–285; sequence TAEQLVQ. A helical membrane pass occupies residues 286-306; that stretch reads IFGFVLAYGLFQMLNGFFMVA. Topologically, residues 307–377 are cytoplasmic; that stretch reads AYKMYKRRLK…TPTGDIARAK (71 aa). Positions 319–377 are disordered; that stretch reads HGNEKPSCQEARHRKKSTSPKETTAFLEVNEEATLSPGPSGPVDPHGAPTPTGDIARAK.

It belongs to the bile acid:sodium symporter (BASS) (TC 2.A.28) family. In terms of processing, glycosylated.

The protein localises to the membrane. The catalysed reaction is estrone 3-sulfate(out) + 2 Na(+)(out) = estrone 3-sulfate(in) + 2 Na(+)(in). It carries out the reaction 17beta-estradiol 3-sulfate(out) + 2 Na(+)(out) = 17beta-estradiol 3-sulfate(in) + 2 Na(+)(in). It catalyses the reaction dehydroepiandrosterone 3-sulfate(out) + 2 Na(+)(out) = dehydroepiandrosterone 3-sulfate(in) + 2 Na(+)(in). The enzyme catalyses androst-5-ene-diol 3-sulfate(out) + 2 Na(+)(out) = androst-5-ene-diol 3-sulfate(in) + 2 Na(+)(in). The catalysed reaction is pregnenolone sulfate(out) + 2 Na(+)(out) = pregnenolone sulfate(in) + 2 Na(+)(in). It carries out the reaction taurolithocholate 3-sulfate(out) + 2 Na(+)(out) = taurolithocholate 3-sulfate(in) + 2 Na(+)(in). It catalyses the reaction androsterone 3alpha-sulfate(out) + 2 Na(+)(out) = androsterone 3alpha-sulfate(in) + 2 Na(+)(in). The enzyme catalyses 5alpha-dihydrotestosterone sulfate(out) + 2 Na(+)(out) = 5alpha-dihydrotestosterone sulfate(in) + 2 Na(+)(in). The catalysed reaction is 17beta-estradiol 17-sulfate(out) + 2 Na(+)(out) = 17beta-estradiol 17-sulfate(in) + 2 Na(+)(in). It carries out the reaction 17alpha-hydroxypregnenolone 3-sulfate(out) + 2 Na(+)(out) = 17alpha-hydroxypregnenolone 3-sulfate(in) + 2 Na(+)(in). It catalyses the reaction epiandrosterone 3-sulfate(out) + 2 Na(+)(out) = epiandrosterone 3-sulfate(in) + 2 Na(+)(in). The enzyme catalyses epitestosterone 17-sulfate(out) + 2 Na(+)(out) = epitestosterone 17-sulfate(in) + 2 Na(+)(in). The catalysed reaction is testosterone 17-sulfate(out) + 2 Na(+)(out) = testosterone 17-sulfate(in) + 2 Na(+)(in). It carries out the reaction 16alpha-hydroxydehydroepiandrosterone 3-sulfate(out) + 2 Na(+)(out) = 16alpha-hydroxydehydroepiandrosterone 3-sulfate(in) + 2 Na(+)(in). Its function is as follows. Transports sulfoconjugated steroid hormones from the extracellular compartment into the cytosol in a sodium-dependent manner without hydrolysis. Steroid sulfate hormones are commonly considered to be biologically inactive metabolites, that may be activated by steroid sulfatases into free steroids. May play an important role by delivering sulfoconjugated steroids to specific target cells in reproductive organs. May play a role transporting the estriol precursor 16alpha-hydroxydehydroepiandrosterone 3-sulfate (16a-OH-DHEAS) at the fetal blood vessel endothelium. Can also transport other sulfoconjugated molecules such as taurolithocholic acid-3-sulfate and sulfoconjugated pyrenes. This is Sodium-dependent organic anion transporter (SLC10A6) from Bos taurus (Bovine).